The primary structure comprises 318 residues: Dehydrogenase/reductase SDR family member 7C-B (318 aa).

A signal peptide spans 1–32 (MGMSDIMWLDVSWAWLVLTAVLLAAAVFYLYT). 49–73 (LITDSLSTVGNECAKLFHAGGARLI) lines the NAD(+) pocket. Serine 186 provides a ligand contact to substrate. The active-site Proton acceptor is tyrosine 199.

It belongs to the short-chain dehydrogenases/reductases (SDR) family.

Its subcellular location is the secreted. Putative oxidoreductase. This is Dehydrogenase/reductase SDR family member 7C-B (dhrs7cb) from Danio rerio (Zebrafish).